The sequence spans 322 residues: Hydrolase C26A3.11 (322 aa).

The CN hydrolase domain maps to 44–290; the sequence is FRIGLVQLAN…PSIVYADIDP (247 aa). The active-site Proton acceptor is glutamate 83. The active-site Proton donor is the lysine 154. Residue cysteine 195 is the Nucleophile of the active site.

The protein belongs to the carbon-nitrogen hydrolase superfamily. NIT1/NIT2 family.

The sequence is that of Hydrolase C26A3.11 from Schizosaccharomyces pombe (strain 972 / ATCC 24843) (Fission yeast).